We begin with the raw amino-acid sequence, 440 residues long: MQFTDTIYALSSGSPPAGVALIRVSGPATADALARLCGPLPPARVATLRTIRTRNSDILDSGLVLYFPGPASFTGEDCCELQVHGGRAVVSAILDELAAMDGLRHAEAGEFARRAFQNGKLDLVEVEGLADLIAAETEMQRRLAVEQSGGGQSALYAGWARRLTHARAMIEAELDFADEDDIPGSVSAAIWTDIGRLREEIDEHIARAGVAEIIRDGLKIVIAGEPNAGKSSLLNALAQRDIAIVTEIAGTTRDVLSVDLSLAGFSVKLFDTAGLRETDEVVEREGIRRARQVIADADLVLLLSEKPSDFRLDEWQPGKSVPVIRVATKVDRPMPRWKTSEADVFLSTRTGEGMDKLLAMLQAHLPDLAGNTALSMPSRRRHVDCLRQAGAALVRSMEARELELQAEQLRQAGDALGRITGRVDVEKLLDVIFSEFCIGK.

(6S)-5-formyl-5,6,7,8-tetrahydrofolate is bound by residues Arg23, Glu80, and Lys120. Residues 217–366 form the TrmE-type G domain; sequence GLKIVIAGEP…LLAMLQAHLP (150 aa). Asn227 lines the K(+) pocket. Residues 227 to 232, 246 to 252, and 271 to 274 each bind GTP; these read NAGKSS, TEIAGTT, and DTAG. Residue Ser231 coordinates Mg(2+). K(+) contacts are provided by Thr246, Ile248, and Thr251. Thr252 serves as a coordination point for Mg(2+). Lys440 lines the (6S)-5-formyl-5,6,7,8-tetrahydrofolate pocket.

Belongs to the TRAFAC class TrmE-Era-EngA-EngB-Septin-like GTPase superfamily. TrmE GTPase family. In terms of assembly, homodimer. Heterotetramer of two MnmE and two MnmG subunits. It depends on K(+) as a cofactor.

It localises to the cytoplasm. In terms of biological role, exhibits a very high intrinsic GTPase hydrolysis rate. Involved in the addition of a carboxymethylaminomethyl (cmnm) group at the wobble position (U34) of certain tRNAs, forming tRNA-cmnm(5)s(2)U34. This is tRNA modification GTPase MnmE from Sinorhizobium medicae (strain WSM419) (Ensifer medicae).